The chain runs to 396 residues: Tryptophan synthase beta chain (396 aa).

Lys-86 carries the post-translational modification N6-(pyridoxal phosphate)lysine.

It belongs to the TrpB family. In terms of assembly, tetramer of two alpha and two beta chains. Pyridoxal 5'-phosphate is required as a cofactor.

The enzyme catalyses (1S,2R)-1-C-(indol-3-yl)glycerol 3-phosphate + L-serine = D-glyceraldehyde 3-phosphate + L-tryptophan + H2O. It functions in the pathway amino-acid biosynthesis; L-tryptophan biosynthesis; L-tryptophan from chorismate: step 5/5. In terms of biological role, the beta subunit is responsible for the synthesis of L-tryptophan from indole and L-serine. The chain is Tryptophan synthase beta chain from Francisella tularensis subsp. novicida (strain U112).